Here is a 397-residue protein sequence, read N- to C-terminus: Enoyl-[acyl-carrier-protein] reductase [NADH] (397 aa).

Residues 48–53, 74–75, 111–112, and 139–140 contribute to the NAD(+) site; these read GASTGY, FE, DA, and LA. Tyr225 provides a ligand contact to substrate. The active-site Proton donor is the Tyr235. Residues Lys244 and 273-275 each bind NAD(+); that span reads VVT.

Belongs to the TER reductase family. In terms of assembly, monomer.

The enzyme catalyses a 2,3-saturated acyl-[ACP] + NAD(+) = a (2E)-enoyl-[ACP] + NADH + H(+). The protein operates within lipid metabolism; fatty acid biosynthesis. Its function is as follows. Involved in the final reduction of the elongation cycle of fatty acid synthesis (FAS II). Catalyzes the reduction of a carbon-carbon double bond in an enoyl moiety that is covalently linked to an acyl carrier protein (ACP). The polypeptide is Enoyl-[acyl-carrier-protein] reductase [NADH] (Edwardsiella ictaluri (strain 93-146)).